The chain runs to 272 residues: Prohibitin 1 (272 aa).

Positions 177-211 (KEFTEAVEMKQVAQQEAERARFIVEKAEQQKKAAV) form a coiled coil.

In terms of assembly, the mitochondrial prohibitin complex consists of two subunits (PHB1 and PHB2), assembled into a membrane-associated ring-shaped supercomplex of approximately 1 mDa.

It localises to the mitochondrion inner membrane. It is found in the nucleus. The protein resides in the cytoplasm. The protein localises to the cell membrane. Functionally, protein with pleiotropic attributes mediated in a cell-compartment- and tissue-specific manner, which include the plasma membrane-associated cell signaling functions, mitochondrial chaperone, and transcriptional co-regulator of transcription factors in the nucleus. In the mitochondria, together with PHB2, forms large ring complexes (prohibitin complexes) in the inner mitochondrial membrane (IMM) and functions as a chaperone protein that stabilizes mitochondrial respiratory enzymes and maintains mitochondrial integrity in the IMM, which is required for mitochondrial morphogenesis, neuronal survival, and normal lifespan. In terms of biological role, in the nucleus, acts as a transcription coregulator, enhances promoter binding by TP53, a transcription factor it activates, but reduces the promoter binding by E2F1, a transcription factor it represses. Its function is as follows. In the plasma membrane, cooperates with CD86 to mediate CD86-signaling in B lymphocytes that regulates the level of IgG1 produced through the activation of distal signaling intermediates. Upon CD40 engagement, required to activate NF-kappa-B signaling pathway via phospholipase C and protein kinase C activation. In Gallus gallus (Chicken), this protein is Prohibitin 1 (PHB1).